The primary structure comprises 371 residues: uncharacterized protein (371 aa).

It belongs to the serpin family.

This is an uncharacterized protein from Pyrobaculum aerophilum (strain ATCC 51768 / DSM 7523 / JCM 9630 / CIP 104966 / NBRC 100827 / IM2).